The following is a 521-amino-acid chain: Cytoplasmic polyadenylation element-binding protein 2 (521 aa).

Residues 1 to 11 are compositionally biased toward pro residues; it reads MNLPQQQPPAA. 2 disordered regions span residues 1–35 and 50–88; these read MNLPQQQPPAAAPQQPQSRRSPVSPQLQQQHQAAA and PLLKQSPWSNHQNSGWGTASMSWGAMHGRDHRRSGNMGI. Residues 12–35 are compositionally biased toward low complexity; it reads APQQPQSRRSPVSPQLQQQHQAAA. Ser21 bears the Phosphoserine mark. A compositionally biased stretch (polar residues) spans 55–70; that stretch reads SPWSNHQNSGWGTASM. 2 RRM domains span residues 264 to 355 and 372 to 454; these read RKVF…PWNL and KTIF…PYVL.

Belongs to the RRM CPEB family. Interacts with TENT2/GLD2. Expressed in embryo, cerebellum, salivary gland, thymus, heart, liver, lung, spleen, kidney, intestine, ovary and round spermatids. Weakly expressed in granular cells of dentate gyrus and the pyramidal cells of CA3 and CA1 of the hippocampus.

Its subcellular location is the cytoplasm. Its function is as follows. May play a role in translational regulation of stored mRNAs in transcriptionally inactive haploid spermatids. Binds to poly(U) RNA oligomers. Required for cell cycle progression, specifically for the transition from metaphase to anaphase. The chain is Cytoplasmic polyadenylation element-binding protein 2 (Cpeb2) from Mus musculus (Mouse).